The following is a 202-amino-acid chain: Translation initiation factor IF-3 (202 aa).

The disordered stretch occupies residues 178–202 (TPRKTPLLKKESETTEPKKALRSIN). The segment covering 185-196 (LKKESETTEPKK) has biased composition (basic and acidic residues).

Belongs to the IF-3 family. Monomer.

The protein localises to the cytoplasm. IF-3 binds to the 30S ribosomal subunit and shifts the equilibrium between 70S ribosomes and their 50S and 30S subunits in favor of the free subunits, thus enhancing the availability of 30S subunits on which protein synthesis initiation begins. The polypeptide is Translation initiation factor IF-3 (Prochlorococcus marinus (strain NATL1A)).